The following is a 157-amino-acid chain: SsrA-binding protein (157 aa).

The protein belongs to the SmpB family.

The protein resides in the cytoplasm. In terms of biological role, required for rescue of stalled ribosomes mediated by trans-translation. Binds to transfer-messenger RNA (tmRNA), required for stable association of tmRNA with ribosomes. tmRNA and SmpB together mimic tRNA shape, replacing the anticodon stem-loop with SmpB. tmRNA is encoded by the ssrA gene; the 2 termini fold to resemble tRNA(Ala) and it encodes a 'tag peptide', a short internal open reading frame. During trans-translation Ala-aminoacylated tmRNA acts like a tRNA, entering the A-site of stalled ribosomes, displacing the stalled mRNA. The ribosome then switches to translate the ORF on the tmRNA; the nascent peptide is terminated with the 'tag peptide' encoded by the tmRNA and targeted for degradation. The ribosome is freed to recommence translation, which seems to be the essential function of trans-translation. This chain is SsrA-binding protein, found in Bacillus licheniformis (strain ATCC 14580 / DSM 13 / JCM 2505 / CCUG 7422 / NBRC 12200 / NCIMB 9375 / NCTC 10341 / NRRL NRS-1264 / Gibson 46).